We begin with the raw amino-acid sequence, 375 residues long: Matrix protein (375 aa).

This sequence belongs to the morbillivirus/respirovirus/rubulavirus M protein family.

It is found in the virion. Functionally, the M protein has a crucial role in virus assembly and interacts with the RNP complex as well as with the viral membrane. The polypeptide is Matrix protein (M) (Homo sapiens (Human)).